We begin with the raw amino-acid sequence, 284 residues long: UPF0294 protein VV2535 (284 aa).

The protein belongs to the UPF0294 family.

Its subcellular location is the cytoplasm. The sequence is that of UPF0294 protein VV2535 from Vibrio vulnificus (strain YJ016).